A 336-amino-acid polypeptide reads, in one-letter code: Probable allantoicase 2 (336 aa).

Belongs to the allantoicase family.

The catalysed reaction is allantoate + H2O = (S)-ureidoglycolate + urea. The protein operates within nitrogen metabolism; (S)-allantoin degradation; (S)-ureidoglycolate from allantoate (aminidohydrolase route): step 1/1. The protein is Probable allantoicase 2 of Burkholderia mallei (strain ATCC 23344).